The chain runs to 567 residues: MEAERRPAPGSPSEGLFADGHLILWTLCSVLLPVFITFWCSLQRSRRQLHRRDIFRKSKHGWRDTDLFSQPTYCCVCAQHILQGAFCDCCGLRVDEGCLRKADKRFQCKEIMLKNDTKVLDAMPHHWIRGNVPLCSYCMVCKQQCGCQPKLCDYRCIWCQKTVHDECMKNSLKNEKCDFGEFKNLIIPPSYLTSINQMRKDKKTDYEVLASKLGKQWTPLIILANSRSGTNMGEGLLGEFRILLNPVQVFDVTKTPPIKALQLCTLLPYYSARVLVCGGDGTVGWVLDAVDDMKIKGQEKYIPQVAVLPLGTGNDLSNTLGWGTGYAGEIPVAQVLRNVMEADGIKLDRWKVQVTNKGYYNLRKPKEFTMNNYFSVGPDALMALNFHAHREKAPSLFSSRILNKAVYLFYGTKDCLVQECKDLNKKVELELDGERVALPSLEGIIVLNIGYWGGGCRLWEGMGDETYPLARHDDGLLEVVGVYGSFHCAQIQVKLANPFRIGQAHTVRLILKCSMMPMQVDGEPWAQGPCTVTITHKTHAMMLYFSGEQTDDDISSTSDQEDIKATE.

The chain crosses the membrane as a helical span at residues 22-42; sequence LILWTLCSVLLPVFITFWCSL. 2 consecutive Phorbol-ester/DAG-type zinc fingers follow at residues 59–108 and 124–177; these read KHGW…RFQC and PHHW…NEKC. Positions 215–356 constitute a DAGKc domain; that stretch reads KQWTPLIILA…LDRWKVQVTN (142 aa).

Belongs to the eukaryotic diacylglycerol kinase family. As to expression, expressed predominantly in testis. Expressed in endothelium, platelets and podocytes (at protein level).

The protein localises to the membrane. It is found in the cytoplasm. It catalyses the reaction a 1,2-diacyl-sn-glycerol + ATP = a 1,2-diacyl-sn-glycero-3-phosphate + ADP + H(+). The enzyme catalyses 1-hexadecanoyl-2-(5Z,8Z,11Z,14Z-eicosatetraenoyl)-sn-glycerol + ATP = 1-hexadecanoyl-2-(5Z,8Z,11Z,14Z-eicosatetraenoyl)-sn-glycero-3-phosphate + ADP + H(+). The catalysed reaction is 1-octadecanoyl-2-(5Z,8Z,11Z,14Z-eicosatetraenoyl)-sn-glycerol + ATP = 1-octadecanoyl-2-(5Z,8Z,11Z,14Z-eicosatetraenoyl)-sn-glycero-3-phosphate + ADP + H(+). It carries out the reaction 1-eicosanoyl-2-(5Z,8Z,11Z,14Z)-eicosatetraenoyl-sn-glycerol + ATP = 1-eicosanoyl-2-(5Z,8Z,11Z,14Z)-eicosatetraenoyl-sn-glycero-3-phosphate + ADP + H(+). It catalyses the reaction 1,2-di-(5Z,8Z,11Z,14Z)-eicosatetraenoyl-sn-glycerol + ATP = 1,2-di-(5Z,8Z,11Z,14Z)-eicosatetraenoyl-sn-glycero-3-phosphate + ADP + H(+). The enzyme catalyses 1-octadecanoyl-2-(9Z,12Z)-octadecadienoyl-sn-glycerol + ATP = 1-octadecanoyl-2-(9Z,12Z-octadecadienoyl)-sn-glycero-3-phosphate + ADP + H(+). The catalysed reaction is 1,2-di-(9Z,12Z-octadecadienoyl)-sn-glycerol + ATP = 1,2-di-(9Z,12Z-octadecadienoyl)-sn-glycero-3-phosphate + ADP + H(+). It carries out the reaction 1,2-di-(9Z-octadecenoyl)-sn-glycerol + ATP = 1,2-di-(9Z-octadecenoyl)-sn-glycero-3-phosphate + ADP + H(+). Its pathway is lipid metabolism; glycerolipid metabolism. Its activity is regulated as follows. Undergoes competitive inhibition by its own product 1,2-diacyl-sn-glycero-3-phosphate/phosphatidic acid. The strongest inhibition being observed in vitro with 1-octadecanoyl-2-(5Z,8Z,11Z,14Z-eicosatetraenoyl)-sn-glycero-3-phosphate, a major intermediate in the phosphatidylinositol turnover cycle and more generally by diacylglycerols with an arachidonoyl acyl chain at the sn-2 position. In terms of biological role, membrane-bound diacylglycerol kinase that converts diacylglycerol/DAG into phosphatidic acid/phosphatidate/PA and regulates the respective levels of these two bioactive lipids. Thereby, acts as a central switch between the signaling pathways activated by these second messengers with different cellular targets and opposite effects in numerous biological processes. Also plays an important role in the biosynthesis of complex lipids. Displays specificity for diacylglycerol substrates with an arachidonoyl acyl chain at the sn-2 position, with the highest activity toward 1-octadecanoyl-2-(5Z,8Z,11Z,14Z-eicosatetraenoyl)-sn-glycerol the main diacylglycerol intermediate within the phosphatidylinositol turnover cycle. Can also phosphorylate diacylglycerol substrates with a linoleoyl acyl chain at the sn-2 position but much less efficiently. The chain is Diacylglycerol kinase epsilon (DGKE) from Homo sapiens (Human).